Consider the following 58-residue polypeptide: Transactivator protein ORF121 (58 aa).

Its function is as follows. Stimulates the expression of 39k gene most probably by increasing IE1 expression. The protein is Transactivator protein ORF121 (AC121) of Lepidoptera (butterflies and moths).